Consider the following 497-residue polypeptide: MYSRCIALVFVGLLASSLAANCYGPAGKLAVAEFDAFPSPVAVGGTVYIRTNIQPTYDMGSATVQLSVYYSDNFDVTGLKPVVDIPGLQLCNLSTSITCPITAGTHILAWEYRVPDVLPGTYQVKYTILEDNPPDGNPYSCIQFSITVEGQKTNEFTSWYQATLLGTALFTQPDYKLRQIGEALQVGPSGPLNGSISPVPYNGSIKYLSGSGDLVPNAFYDTSNFVWGLSGTMVKQTIGALGQISHIYQGECYLGYINNINTSIAGNFYDYMTPLIDGTFTLNWTYTDSSTAEINGVAQFQPAATIPYGWGFPLLYGRLGEHQVVTSDVGFLMIKGNMPFCTSGVCAAPPAQGGSKHHGLSSQKLGLAIGLPIAGVFLIILIAAAIIYYRKRRESEKEDGVFAVSRKPEYGSALVVDGIIEETMGSKTMQAMLDMRDDDESEHDSDDGYGRSGQSGRSGRSRSRSRSRSVSRSRSGSRDARSESDPGESASRDSDSD.

A signal peptide spans 1–19; sequence MYSRCIALVFVGLLASSLA. The Extracellular segment spans residues 20-366; sequence ANCYGPAGKL…HHGLSSQKLG (347 aa). N-linked (GlcNAc...) asparagine glycosylation is found at N92, N193, N202, N261, and N283. Residues 367-387 traverse the membrane as a helical segment; the sequence is LAIGLPIAGVFLIILIAAAII. Residues 388 to 497 lie on the Cytoplasmic side of the membrane; it reads YYRKRRESEK…ESASRDSDSD (110 aa). Residues 424-450 form a necessary for phosphorylation by PSRPK in vitro region; sequence MGSKTMQAMLDMRDDDESEHDSDDGYG. Positions 436-447 are enriched in acidic residues; sequence RDDDESEHDSDD. A disordered region spans residues 436–497; that stretch reads RDDDESEHDS…ESASRDSDSD (62 aa). Residues 459–471 show a composition bias toward basic residues; that stretch reads GRSRSRSRSRSVS. The segment covering 476-497 has biased composition (basic and acidic residues); it reads GSRDARSESDPGESASRDSDSD.

Post-translationally, phosphorylated on serine residues in the RS domain by PSRPK.

Its subcellular location is the membrane. The sequence is that of Serine/arginine-rich protein PSR from Physarum polycephalum (Slime mold).